We begin with the raw amino-acid sequence, 266 residues long: MAINTSRTQILFITIISFLILAQNVNSAAFTVSNFDPYKTNIELEGNAFISDGSIHLTNVIPNSAGRASWGGPVRLWDADTGNLAGFTSVFSFEVAPAGPGLIGDGITFFIAPFNSHIPKNSSGGFLGLFNAETALNTYQNRIVAVEFDSFGGNSGGNPWDPAYPHVGIDVNSIASVTTAPWKTGSILTGFNAIAFVNYEPVEKNLSVVVRYPGGNFVNGTSNSVSFIIDLRTVLPEWVRIGFSGATGQLVELHKILSWTFKSSFQ.

A signal peptide spans 1-27 (MAINTSRTQILFITIISFLILAQNVNS). N-linked (GlcNAc...) asparagine glycosylation is found at Asn-121, Asn-205, and Asn-219.

This sequence belongs to the leguminous lectin family.

Functionally, may be involved in arbuscular mycorrhizal (AM) symbiosis with AM fungi. This Medicago truncatula (Barrel medic) protein is Lectin 7.